We begin with the raw amino-acid sequence, 262 residues long: MSNEYNWLRQLNLFFVATGFFTRLPTPSWVIADDNELKKSSRYFGLVGLLIGLICALVYWFTQQWLPTSVAVLLAMVAGVLVTGGFHEDGLADTADGFLGGKTFEDKLRIMKDNHLGSYGAIVLALILLLRWQLLVELALFSPWAAITGFIVAHTLSRVLAASLIFSVKYVTDLELEEGKRLSHDQSLNDLFILLASGIFVLFWLNGLAAFVLFISLWALRFCLCKYFRSQIGGYTGDTLDAAQQVSEIMCYLIILAVGLSA.

6 helical membrane-spanning segments follow: residues 11 to 31 (LNLF…SWVI), 43 to 63 (YFGL…WFTQ), 66 to 86 (LPTS…TGGF), 121 to 141 (AIVL…LALF), 146 to 166 (AITG…SLIF), and 199 to 219 (IFVL…SLWA).

It belongs to the CobS family. The cofactor is Mg(2+).

Its subcellular location is the cell inner membrane. The enzyme catalyses alpha-ribazole + adenosylcob(III)inamide-GDP = adenosylcob(III)alamin + GMP + H(+). It carries out the reaction alpha-ribazole 5'-phosphate + adenosylcob(III)inamide-GDP = adenosylcob(III)alamin 5'-phosphate + GMP + H(+). It participates in cofactor biosynthesis; adenosylcobalamin biosynthesis; adenosylcobalamin from cob(II)yrinate a,c-diamide: step 7/7. Its function is as follows. Joins adenosylcobinamide-GDP and alpha-ribazole to generate adenosylcobalamin (Ado-cobalamin). Also synthesizes adenosylcobalamin 5'-phosphate from adenosylcobinamide-GDP and alpha-ribazole 5'-phosphate. The polypeptide is Adenosylcobinamide-GDP ribazoletransferase (Shewanella denitrificans (strain OS217 / ATCC BAA-1090 / DSM 15013)).